Consider the following 385-residue polypeptide: Cell division protein FtsZ (385 aa).

GTP is bound by residues 37-41, 125-127, E156, K160, and D204; these read GGGSN and GTG.

This sequence belongs to the FtsZ family. In terms of assembly, homodimer. Polymerizes to form a dynamic ring structure in a strictly GTP-dependent manner. Interacts directly with several other division proteins.

The protein localises to the cytoplasm. Functionally, essential cell division protein that forms a contractile ring structure (Z ring) at the future cell division site. The regulation of the ring assembly controls the timing and the location of cell division. One of the functions of the FtsZ ring is to recruit other cell division proteins to the septum to produce a new cell wall between the dividing cells. Binds GTP and shows GTPase activity. The chain is Cell division protein FtsZ from Helicobacter pylori (strain J99 / ATCC 700824) (Campylobacter pylori J99).